The primary structure comprises 386 residues: Trichocyst matrix protein T2-A (386 aa).

An N-terminal signal peptide occupies residues 1–19 (MKTVILALALIVLASSTQA). The propeptide occupies 20–48 (DVIATIKKIDQSPFGRTLFDTIYLELQTG). Residues 51–154 (LDRLLSTLTD…AEEHEDFEEK (104 aa)) are a coiled coil. The propeptide occupies 184 to 238 (KGKATKQTHKFTKEVASMIQKHFTTSAKKTAKFQHRKGYSKLFKAFATIASKVEQ). Residues 293-332 (SALANATSDLASLNDIIAQVEASLDTTEQRIENVSADRHD) are a coiled coil.

It belongs to the TMP family.

It localises to the trichocyst. Functionally, structural protein that crystallize inside the trichocyst matrix. The polypeptide is Trichocyst matrix protein T2-A (T2A) (Paramecium tetraurelia).